A 110-amino-acid polypeptide reads, in one-letter code: Eukaryotic translation initiation factor eIF1 (110 aa).

Threonine 40 carries the phosphothreonine modification.

This sequence belongs to the SUI1 family.

Functionally, probably involved in translation. The sequence is that of Eukaryotic translation initiation factor eIF1 from Drosophila melanogaster (Fruit fly).